We begin with the raw amino-acid sequence, 185 residues long: uncharacterized protein (185 aa).

To M.thermoautotrophicum MTH236.

This is an uncharacterized protein from Methanocaldococcus jannaschii (strain ATCC 43067 / DSM 2661 / JAL-1 / JCM 10045 / NBRC 100440) (Methanococcus jannaschii).